Here is a 226-residue protein sequence, read N- to C-terminus: Ribosomal RNA small subunit methyltransferase G (226 aa).

S-adenosyl-L-methionine contacts are provided by residues Gly-95, Leu-100, 146-147, and Arg-159; that span reads VE.

The protein belongs to the methyltransferase superfamily. RNA methyltransferase RsmG family.

It localises to the cytoplasm. It catalyses the reaction guanosine(527) in 16S rRNA + S-adenosyl-L-methionine = N(7)-methylguanosine(527) in 16S rRNA + S-adenosyl-L-homocysteine. Its function is as follows. Specifically methylates the N7 position of guanine in position 527 of 16S rRNA. The protein is Ribosomal RNA small subunit methyltransferase G of Acidovorax sp. (strain JS42).